The primary structure comprises 91 residues: Small ribosomal subunit protein bS16 (91 aa).

It belongs to the bacterial ribosomal protein bS16 family.

In Enterococcus faecalis (strain ATCC 700802 / V583), this protein is Small ribosomal subunit protein bS16.